A 132-amino-acid chain; its full sequence is Fatty acid-binding protein, brain (132 aa).

N-acetylvaline is present on V2. Residue 127–129 (RHY) coordinates a fatty acid.

The protein belongs to the calycin superfamily. Fatty-acid binding protein (FABP) family. As to quaternary structure, monomer.

It localises to the cytoplasm. Functionally, FABPs are thought to play a role in the intracellular transport of long-chain fatty acids and their acyl-CoA esters. Binds oleic and palmitic acids but not palmitoyl CoA. The protein is Fatty acid-binding protein, brain (FABP7) of Bos taurus (Bovine).